The primary structure comprises 316 residues: 4-diphosphocytidyl-2-C-methyl-D-erythritol kinase (316 aa).

Residue K23 is part of the active site. 108-118 serves as a coordination point for ATP; it reads PVAGGMAGGSA. The active site involves D150.

This sequence belongs to the GHMP kinase family. IspE subfamily.

The enzyme catalyses 4-CDP-2-C-methyl-D-erythritol + ATP = 4-CDP-2-C-methyl-D-erythritol 2-phosphate + ADP + H(+). It participates in isoprenoid biosynthesis; isopentenyl diphosphate biosynthesis via DXP pathway; isopentenyl diphosphate from 1-deoxy-D-xylulose 5-phosphate: step 3/6. Catalyzes the phosphorylation of the position 2 hydroxy group of 4-diphosphocytidyl-2C-methyl-D-erythritol. This is 4-diphosphocytidyl-2-C-methyl-D-erythritol kinase from Mycobacterium avium (strain 104).